The primary structure comprises 544 residues: Protein kinase dsk1 (544 aa).

A Protein kinase domain is found at tyrosine 81 to leucine 516. ATP is bound by residues leucine 87–valine 95 and lysine 110. The Proton acceptor role is filled by aspartate 214. 2 disordered regions span residues proline 235–phenylalanine 299 and isoleucine 316–leucine 341. Positions threonine 237–threonine 254 are enriched in low complexity. Composition is skewed to polar residues over residues lysine 281–phenylalanine 299 and histidine 327–asparagine 337.

This sequence belongs to the protein kinase superfamily. Ser/Thr protein kinase family. Phosphorylated on Ser residue(s).

It is found in the cytoplasm. The protein localises to the nucleus. It catalyses the reaction L-seryl-[protein] + ATP = O-phospho-L-seryl-[protein] + ADP + H(+). It carries out the reaction L-threonyl-[protein] + ATP = O-phospho-L-threonyl-[protein] + ADP + H(+). In terms of biological role, may play an important role in mitotic control by altering cellular location, degree of phosphorylation and kinase activity. Abundant expression accelerates the exit when cells are in M-phase and also delays the entry into mitosis when cells are in G2. Phosphorylates prp2 in vitro and so may have a role in co-ordinating pre-mRNA splicing with the progression of the cell division cycle. This is Protein kinase dsk1 (dsk1) from Schizosaccharomyces pombe (strain 972 / ATCC 24843) (Fission yeast).